A 155-amino-acid chain; its full sequence is Cardio acceleratory peptide 2b (155 aa).

The signal sequence occupies residues methionine 1–alanine 26. A propeptide spanning residues glutamate 27–asparagine 33 is cleaved from the precursor. The residue at position 47 (valine 47) is a Valine amide. Residues serine 50–glutamine 85 constitute a propeptide that is removed on maturation. A Valine amide modification is found at valine 96. The propeptide occupies serine 99 to aspartate 117. The residue at position 134 (leucine 134) is a Leucine amide. Positions serine 138–asparagine 155 are excised as a propeptide.

This sequence belongs to the pyrokinin family.

The protein localises to the secreted. Functionally, CAP-1 and CAP-2, but not CAP-3 are ligands for the Capa receptor. CAP-1 and CAP-2 are probably components of the signal transduction pathway that leads to Malpighian tubule fluid secretion via the second messenger nitric oxide. In Drosophila pseudoobscura pseudoobscura (Fruit fly), this protein is Cardio acceleratory peptide 2b.